Consider the following 148-residue polypeptide: 3-hydroxyacyl-[acyl-carrier-protein] dehydratase FabZ (148 aa).

Residue His49 is part of the active site.

Belongs to the thioester dehydratase family. FabZ subfamily.

The protein localises to the cytoplasm. The enzyme catalyses a (3R)-hydroxyacyl-[ACP] = a (2E)-enoyl-[ACP] + H2O. In terms of biological role, involved in unsaturated fatty acids biosynthesis. Catalyzes the dehydration of short chain beta-hydroxyacyl-ACPs and long chain saturated and unsaturated beta-hydroxyacyl-ACPs. The polypeptide is 3-hydroxyacyl-[acyl-carrier-protein] dehydratase FabZ (Ehrlichia canis (strain Jake)).